The following is a 251-amino-acid chain: MILKKISILSDNYVWVLLNTSGSCIIIDPGLSEPIIQEIERKKWRLRAILLTHNHIDHTGGTRKIIEYFPKISVFGPKETRQHGVNKIVSHGDRIILLDKIFYVFFTPGHTSGHVSYYSQPYIFCGDTLFSAGCGRVFKNKHLEMYRSIKIISSLPDSTLLCCSHEYTLSNLQFSMFILPNDNFIKLYLKKIEIKLKLGQSSLPSYIFFEKKINLFLRTNDNYVKKSIGLKSTCTDFEVFKRLRLKKDFWS.

Zn(2+) contacts are provided by His-53, His-55, Asp-57, His-58, His-110, Asp-127, and His-165.

Belongs to the metallo-beta-lactamase superfamily. Glyoxalase II family. As to quaternary structure, monomer. Zn(2+) serves as cofactor.

It catalyses the reaction an S-(2-hydroxyacyl)glutathione + H2O = a 2-hydroxy carboxylate + glutathione + H(+). It participates in secondary metabolite metabolism; methylglyoxal degradation; (R)-lactate from methylglyoxal: step 2/2. Thiolesterase that catalyzes the hydrolysis of S-D-lactoyl-glutathione to form glutathione and D-lactic acid. The polypeptide is Hydroxyacylglutathione hydrolase (Buchnera aphidicola subsp. Acyrthosiphon pisum (strain APS) (Acyrthosiphon pisum symbiotic bacterium)).